Reading from the N-terminus, the 334-residue chain is Ornithine carbamoyltransferase (334 aa).

Carbamoyl phosphate is bound by residues Ser57–Thr60, Gln84, Arg108, and His135–Gln138. Residues Asn169, Asp233, and Ser237–Met238 contribute to the L-ornithine site. Residues Cys275–Leu276 and Arg320 contribute to the carbamoyl phosphate site.

Belongs to the aspartate/ornithine carbamoyltransferase superfamily. OTCase family.

It localises to the cytoplasm. The catalysed reaction is carbamoyl phosphate + L-ornithine = L-citrulline + phosphate + H(+). Its pathway is amino-acid biosynthesis; L-arginine biosynthesis; L-arginine from L-ornithine and carbamoyl phosphate: step 1/3. Its function is as follows. Reversibly catalyzes the transfer of the carbamoyl group from carbamoyl phosphate (CP) to the N(epsilon) atom of ornithine (ORN) to produce L-citrulline. The sequence is that of Ornithine carbamoyltransferase (argF) from Pasteurella multocida (strain Pm70).